We begin with the raw amino-acid sequence, 94 residues long: Integration host factor subunit beta (94 aa).

It belongs to the bacterial histone-like protein family. Heterodimer of an alpha and a beta chain.

Its function is as follows. This protein is one of the two subunits of integration host factor, a specific DNA-binding protein that functions in genetic recombination as well as in transcriptional and translational control. In Citrobacter koseri (strain ATCC BAA-895 / CDC 4225-83 / SGSC4696), this protein is Integration host factor subunit beta.